We begin with the raw amino-acid sequence, 209 residues long: dITP/XTP pyrophosphatase (209 aa).

Thr7–Lys12 is a substrate binding site. Catalysis depends on Asp73, which acts as the Proton acceptor. Position 73 (Asp73) interacts with Mg(2+). Residues Ser74, Phe155–Asp158, Lys178, and His183–Arg184 contribute to the substrate site.

It belongs to the HAM1 NTPase family. In terms of assembly, homodimer. Mg(2+) is required as a cofactor.

It carries out the reaction XTP + H2O = XMP + diphosphate + H(+). It catalyses the reaction dITP + H2O = dIMP + diphosphate + H(+). The enzyme catalyses ITP + H2O = IMP + diphosphate + H(+). Its function is as follows. Pyrophosphatase that catalyzes the hydrolysis of nucleoside triphosphates to their monophosphate derivatives, with a high preference for the non-canonical purine nucleotides XTP (xanthosine triphosphate), dITP (deoxyinosine triphosphate) and ITP. Seems to function as a house-cleaning enzyme that removes non-canonical purine nucleotides from the nucleotide pool, thus preventing their incorporation into DNA/RNA and avoiding chromosomal lesions. This is dITP/XTP pyrophosphatase from Sulfurovum sp. (strain NBC37-1).